The primary structure comprises 473 residues: Purple acid phosphatase 1 (473 aa).

The first 38 residues, 1–38, serve as a signal peptide directing secretion; it reads MRLVVVGLWCLILGLILNPTKFCDAGVTSSYVRKSLSA. Asn118 is a glycosylation site (N-linked (GlcNAc...) asparagine). A Fe cation-binding site is contributed by Asp172. An N-linked (GlcNAc...) asparagine glycan is attached at Asn180. 2 residues coordinate Fe cation: Asp201 and Tyr204. Asp201 is a Mn(2+) binding site. Asn238 is a binding site for Mn(2+). Asn238 contacts substrate. N-linked (GlcNAc...) asparagine glycosylation is present at Asn311. His323 serves as a coordination point for Mn(2+). His333 (proton donor) is an active-site residue. His360 provides a ligand contact to Mn(2+). Substrate is bound at residue 360 to 362; the sequence is HVH. His362 contributes to the Fe cation binding site. Asn433 carries an N-linked (GlcNAc...) asparagine glycan.

Belongs to the metallophosphoesterase superfamily. Purple acid phosphatase family. Homodimer; disulfide-linked. Fe cation is required as a cofactor. The cofactor is Mn(2+). Requires Zn(2+) as cofactor. Cu(2+) serves as cofactor. It depends on Mg(2+) as a cofactor.

It is found in the secreted. It carries out the reaction a phosphate monoester + H2O = an alcohol + phosphate. In Ipomoea batatas (Sweet potato), this protein is Purple acid phosphatase 1 (PAP1).